The following is a 415-amino-acid chain: Vascular endothelial growth factor C (415 aa).

The first 31 residues, 1–31 (MHLLCFLSLACSLLAAALIPSPREAPATVAA), serve as a signal peptide directing secretion. A propeptide spanning residues 32–107 (FESGLGFSEA…RTGDSVKFAA (76 aa)) is cleaved from the precursor. Disulfide bonds link Cys-127-Cys-169, Cys-158-Cys-205, and Cys-162-Cys-207. 3 N-linked (GlcNAc...) asparagine glycosylation sites follow: Asn-171, Asn-201, and Asn-236. Residues 224–415 (SLPATLPQCQ…PSYWKRPHLN (192 aa)) constitute a propeptide that is removed on maturation. Repeat copies occupy residues 276-291 (CGPN…QCVC), 300-315 (CGPH…QCVC), 324-339 (CGAN…QCVC), and 343-358 (CPRN…ACEC). A 4 X 16 AA repeats of C-X(10)-C-X-C-X(1,3)-C region spans residues 276 to 358 (CGPNKELDED…LNPGKCACEC (83 aa)).

The protein belongs to the PDGF/VEGF growth factor family. As to quaternary structure, homodimer; non-covalent and antiparallel. Interacts with FLT4/VEGFR3; the interaction is required for FLT4/VEGFR3 homodimarization and activation. Post-translationally, undergoes a complex proteolytic maturation which generates a variety of processed secreted forms with increased activity toward VEGFR-3, but only the fully processed form could activate VEGFR-2. VEGF-C first form an antiparallel homodimer linked by disulfide bonds. Before secretion, a cleavage occurs between Arg-223 and Ser-224 producing a heterotetramer. The next extracellular step of the processing removes the N-terminal propeptide. Finally the mature VEGF-C is composed mostly of two VEGF homology domains (VHDs) bound by non-covalent interactions. As to expression, expressed in adult heart, brain, spleen, lung, liver, skeletal muscle, kidney, testis and intestine with higher levels in heart, brain and kidney. Isoform 4 levels are very low. Isoform 3 is mostly expressed in liver and has reduced expression level in other tissues. Isoform 2 is mostly expressed in brain and kidney, although a lower level expression in other tissues is also detectable.

It is found in the secreted. In terms of biological role, growth factor active in angiogenesis, and endothelial cell growth, stimulating their proliferation and migration and also has effects on the permeability of blood vessels. May function in angiogenesis of the venous and lymphatic vascular systems during embryogenesis, and also in the maintenance of differentiated lymphatic endothelium in adults. Binds and activates KDR/VEGFR2 and FLT4/VEGFR3 receptors. The chain is Vascular endothelial growth factor C (Vegfc) from Mus musculus (Mouse).